Reading from the N-terminus, the 810-residue chain is Transitional endoplasmic reticulum ATPase homolog 2 (810 aa).

ATP contacts are provided by residues Pro252–Leu258, Asn353, His389, and Gly526–Leu531. The span at Arg713–Glu727 shows a compositional bias: basic and acidic residues. Disordered regions lie at residues Arg713–Glu732 and Phe777–Asn810. Residues Pro793–Gly802 show a composition bias toward gly residues. The tract at residues Asp805 to Asn810 is interaction with ufd-2.

Belongs to the AAA ATPase family. CDC48 subfamily. Homohexamer; oligomerization is ATP-independent. Forms a ring-shaped particle of 18.3 nm diameter, that displays 6-fold radial symmetry. Interacts with cdc-48.1 and thus may form heterohexamers. Forms a complex composed of ubxn-3, cdc-48.1 and/or cdc-48.2 and substrate cdt-1. Interacts (via N-terminus) with ubxn-3. Interacts (via N-terminus) with atx-3 (via RRDR motif). Interacts (via N-terminus) with ubxn-5. Interacts with ufd-1. Interacts (via DDDLYN motif) with ufd-2. Interacts (via N-terminus) with ubxn-1. Interacts (via N-terminus) with ubxn-2. Interacts (via N-terminus) with ubxn-4. Interacts with ubxn-6. Expressed in body wall muscles.

It localises to the cytoplasm. It catalyses the reaction ATP + H2O = ADP + phosphate + H(+). The first ATP-binding region has low ATPase activity. The second ATP-binding region is responsible for ATPase activity. ATP binding to the first ATP-binding region induces intrinsic activity of the second ATP-binding region. While ATP binding to the first ATP-binding region appears to prevent ATP hydrolysis by the second ATP-binding region, ADP-binding to first region promotes the coordinate and cooperative ATPase cycle of the second ATP-binding region. ATP binding to the first ATP-binding region induces a conformational change, promoting the rotation of the first ATP-binding region relative to the second ATP-binding region in the hexamer. Inhibited by N-ethylmaleimide (NEM). ATP-dependent chaperone which probably uses the energy provided by ATP hydrolysis to generate mechanical force to unfold substrate proteins, disassemble protein complexes, and disaggregate protein aggregates. However, able to prevent aggregation of unfolded proteins also in an ATP-independent manner. Targets polyubiquitinated proteins for proteasomal degradation by binding to 'Lys-48'-linked polyubiquitin chains. Involved in the cytoplasmic elimination of misfolded proteins exported from the ER. This pathway, known as ERAD, prevents the activation of the unfolded protein response (UPR) caused by the accumulation of misfolded proteins in the ER. Together with udf-2 and chn-1, regulates myosin assembly in body wall muscles by targeting myosin chaperone unc-45 for proteasomal degradation. During oocyte meiosis and together with cdc-48.1, required for chromosome condensation at the diakinesis phase in prophase I and for progression of metaphase I. During the first embryonic cell division, regulates DNA replication and thus chromosome segregation and decondensation, and nuclear envelope re-assembly. In S phase and in association with ufd-1, npl-4.1 and/or npl-4.2 and ubxn-3, ensures the degradation of DNA licensing factor cdt-1 after the initiation of DNA replication and thus the disassembly of the DNA replication CMG helicase complex by promoting the dissociation from chromatin of several of its components including cdc-45 and sld-5. Regulates ubxn-3 nuclear localization during S phase. During the first embryonic cell divisions and together with cdc-48.1, regulates the re-assembly of the nuclear envelope after mitosis possibly by inactivating kinase air-2, a component of the chromosomal passenger complex (CPC). This is Transitional endoplasmic reticulum ATPase homolog 2 (cdc-48.2) from Caenorhabditis elegans.